Consider the following 175-residue polypeptide: UPF0398 protein SPP_0409 (175 aa).

Belongs to the UPF0398 family.

This chain is UPF0398 protein SPP_0409, found in Streptococcus pneumoniae (strain P1031).